Consider the following 64-residue polypeptide: Bactridin-2 (64 aa).

The 63-residue stretch at 1–63 (KDGYLVGNDG…TWNRATNRCG (63 aa)) folds into the LCN-type CS-alpha/beta domain. Cystine bridges form between C11–C62, C15–C37, C23–C43, and C27–C45.

It belongs to the long (4 C-C) scorpion toxin superfamily. Sodium channel inhibitor family. Beta subfamily. Expressed by the venom gland.

The protein resides in the secreted. Shows antibacterial activity against both Gram-positive bacteria (B.subtilis, M.luteus, E.faecalis) and Gram-negative bacteria (P.aeruginosa, Y.enterocolitica, A.calcoaceticus). Modifies membrane sodium permeability on Y.enterocolitica. Is toxic to mice, but is not to crabs. Induces concentration dependent haemolysis in human erythrocytes. Acts by inhibiting the sodium (Nav) currents. The chain is Bactridin-2 from Tityus discrepans (Venezuelan scorpion).